Consider the following 484-residue polypeptide: UBX domain-containing protein 11 (484 aa).

The interval 1 to 28 (MSSPLASLSKTRKVPLESESVNPGRRGI) is disordered. Positions 69–147 (HDSELMASMT…IGEMERFLSD (79 aa)) form a coiled coil. Positions 227–291 (LEPIPLKVYR…VSDLRNQIYP (65 aa)) constitute an SEP domain. The UBX domain maps to 389–466 (PMPLLSMLRI…GLVPNATLLL (78 aa)). Phosphoserine is present on residues Ser-478 and Ser-482.

As to quaternary structure, interacts with GNA12, GNA13, RND1, RND2 and RND3.

It is found in the cytoplasm. It localises to the cytoskeleton. Functionally, may be involved in the reorganization of actin cytoskeleton mediated by RND1, RND2 and RND3. Promotes RHOA activation mediated by GNA12 and GNA13. In Mus musculus (Mouse), this protein is UBX domain-containing protein 11 (Ubxn11).